The sequence spans 467 residues: 3-isopropylmalate dehydratase large subunit (467 aa).

[4Fe-4S] cluster-binding residues include C347, C407, and C410.

This sequence belongs to the aconitase/IPM isomerase family. LeuC type 1 subfamily. Heterodimer of LeuC and LeuD. Requires [4Fe-4S] cluster as cofactor.

The enzyme catalyses (2R,3S)-3-isopropylmalate = (2S)-2-isopropylmalate. The protein operates within amino-acid biosynthesis; L-leucine biosynthesis; L-leucine from 3-methyl-2-oxobutanoate: step 2/4. In terms of biological role, catalyzes the isomerization between 2-isopropylmalate and 3-isopropylmalate, via the formation of 2-isopropylmaleate. The polypeptide is 3-isopropylmalate dehydratase large subunit (Pelagibacter ubique (strain HTCC1062)).